We begin with the raw amino-acid sequence, 254 residues long: Phosphoribosylaminoimidazole-succinocarboxamide synthase (254 aa).

Belongs to the SAICAR synthetase family.

It catalyses the reaction 5-amino-1-(5-phospho-D-ribosyl)imidazole-4-carboxylate + L-aspartate + ATP = (2S)-2-[5-amino-1-(5-phospho-beta-D-ribosyl)imidazole-4-carboxamido]succinate + ADP + phosphate + 2 H(+). It functions in the pathway purine metabolism; IMP biosynthesis via de novo pathway; 5-amino-1-(5-phospho-D-ribosyl)imidazole-4-carboxamide from 5-amino-1-(5-phospho-D-ribosyl)imidazole-4-carboxylate: step 1/2. The protein is Phosphoribosylaminoimidazole-succinocarboxamide synthase of Brucella melitensis biotype 2 (strain ATCC 23457).